The chain runs to 431 residues: MTWLSGLYFICIASLIFCAIGVILAGVILLSRKLFIKVHPCKLKINDNEELTKTVESGQTLLVSLLSSGIPIPSPCGGKATCKQCKVRVVKNADEPLETDRSTFSKRQLEEGWRLSCQCKVQHDMSLEIEERYLNASSWEGTVISNDNVATFIKELVVAVDPNKPIPFKPGGYLQITVPSYKTNSSDWKQTMAPEYYSDWEHFHLFDQVIDNSQLPADSANKAYSLASYPAELPTIKFNIRIATPPFINGKPNSEIPWGVCSSYVFSLKPGDKITVSGPYGESFMKDDDRPLIFLIGGAGSSFGRSHILDLLLNKHSKREIDLWYGARSLKENIYQEEYENLERQFPNFHYHLVLSEPLPEDIAAGWDKDDPTKTNFLFRAFNLGQLSRLDNPEDYLYYVCGPPLHNSSILKLLGDYGVERSSIILDDFGS.

A helical transmembrane segment spans residues F9–L29. One can recognise a 2Fe-2S ferredoxin-type domain in the interval H39–Y133. Residues C76, C82, C85, and C117 each coordinate [2Fe-2S] cluster. The FAD-binding FR-type domain occupies A136–K286. Positions D289–L413 are catalytic.

This sequence belongs to the NqrF family. As to quaternary structure, composed of six subunits; NqrA, NqrB, NqrC, NqrD, NqrE and NqrF. The cofactor is [2Fe-2S] cluster. It depends on FAD as a cofactor.

Its subcellular location is the cell inner membrane. The enzyme catalyses a ubiquinone + n Na(+)(in) + NADH + H(+) = a ubiquinol + n Na(+)(out) + NAD(+). Functionally, NQR complex catalyzes the reduction of ubiquinone-1 to ubiquinol by two successive reactions, coupled with the transport of Na(+) ions from the cytoplasm to the periplasm. The first step is catalyzed by NqrF, which accepts electrons from NADH and reduces ubiquinone-1 to ubisemiquinone by a one-electron transfer pathway. The polypeptide is Na(+)-translocating NADH-quinone reductase subunit F (Chlamydia pneumoniae (Chlamydophila pneumoniae)).